Consider the following 303-residue polypeptide: Sulfotransferase 6B1 (303 aa).

65-70 (KCGSNW) provides a ligand contact to 3'-phosphoadenylyl sulfate. Catalysis depends on His-118, which acts as the Proton acceptor. Residues Arg-140, Ser-148, Tyr-203, 237 to 242 (STFLAM), and 259 to 261 (RKG) each bind 3'-phosphoadenylyl sulfate.

It belongs to the sulfotransferase 1 family. Expressed in brain, heart, kidney, thymus, lung, liver and testis.

The protein resides in the cytoplasm. Its subcellular location is the cytosol. The catalysed reaction is thyroxine + 3'-phosphoadenylyl sulfate = thyroxine sulfate + adenosine 3',5'-bisphosphate + H(+). Its function is as follows. Sulfotransferase that utilizes 3'-phospho-5'-adenylyl sulfate (PAPS) as sulfonate donor to catalyze the sulfate conjugation of thyroxine. Involved in the metabolism of thyroxine. This is Sulfotransferase 6B1 (Sult6b1) from Mus musculus (Mouse).